Consider the following 709-residue polypeptide: Probable serine/threonine-protein kinase zyg-1 (709 aa).

Positions 13–251 constitute a Protein kinase domain; the sequence is FQNLQQIGQG…LKEIVMTDYV (239 aa). ATP contacts are provided by residues 19–27 and Lys41; that span reads IGQGGFGVV. The Proton acceptor role is filled by Asp130. Disordered regions lie at residues 254–329 and 591–633; these read KMGE…DRAR and SSSQ…PAAT. Composition is skewed to basic and acidic residues over residues 262–291 and 302–313; these read SREHSRDSRSQRSREPFRSSRDGISLERRP and SRRDPDGYRAAH. Polar residues predominate over residues 607 to 627; the sequence is PLSSRTTSSLNVRNGVSSDEN.

This sequence belongs to the protein kinase superfamily. Ser/Thr protein kinase family.

Its subcellular location is the cytoplasm. The protein localises to the cytoskeleton. It localises to the microtubule organizing center. The protein resides in the centrosome. It is found in the centriole. It carries out the reaction L-seryl-[protein] + ATP = O-phospho-L-seryl-[protein] + ADP + H(+). The catalysed reaction is L-threonyl-[protein] + ATP = O-phospho-L-threonyl-[protein] + ADP + H(+). Its function is as follows. Protein kinase that plays a central role in centrosome duplication. Paternal copy is required to regulate synthesis of daughter centrioles prior to fertilization. Maternal copy regulates centrosome duplication during later cell cycles. Functions upstream of sas-5 and sas-6, and is required for their localization to the centrosome. The chain is Probable serine/threonine-protein kinase zyg-1 (zyg-1) from Caenorhabditis briggsae.